Reading from the N-terminus, the 298-residue chain is GTP-binding protein REM 1 (298 aa).

Positions 1–73 are disordered; sequence MTLNTEQEAK…DDWSSESSDS (73 aa). Over residues 35-55 the composition is skewed to polar residues; that stretch reads TVPSTQSQHPRLGQSASLNPP. Phosphoserine is present on serine 51. Low complexity predominate over residues 63-73; that stretch reads PDDWSSESSDS. Residues 87–94 and 195–198 each bind GTP; these read GDPGVGKT and NKAD. Residues 268–287 form a calmodulin-binding region; it reads ARRFLARLTARSARRRALKA.

It belongs to the small GTPase superfamily. RGK family. In vitro, interacts with calmodulin in a calcium-dependent manner. Most highly expressed in the endothelial lining of the blood vessels in uterus and heart. Lower levels found in spleen, lymph node, kidney and testis. Also found in cells with secretory function such as the islets of Langerhans, lobule/duct epithelium in the breast, bile duct epithelium in the liver, surface epithelium in the endometrial glands of the uterus, colon mucosa and acinar cells in the pancreas and the prostate.

Promotes endothelial cell sprouting and actin cytoskeletal reorganization. May be involved in angiogenesis. May function in Ca(2+) signaling. In Homo sapiens (Human), this protein is GTP-binding protein REM 1 (REM1).